Reading from the N-terminus, the 210-residue chain is MVQDIFSKSAVASVKAQRISPRKARLVADLIRYKTATQALIILQTTNKKASGIILKLLNSAIANATNNNGLDATKLVVTEILVNDGPTLKRYQPHSRGRAYPILKRTSHFFIRVSEVSLPSVNEMTSKETVKEPAKKPSAKVEKPAEAKAPKQETSTKKPTTTTESKPKTSKAPAQKQAAKVAKPAAEDTKKPVKKSTTTTKSTKKEGSK.

A disordered region spans residues Asn123–Lys210. The span at Thr126 to Thr157 shows a compositional bias: basic and acidic residues. A compositionally biased stretch (low complexity) spans Lys158–Pro185.

This sequence belongs to the universal ribosomal protein uL22 family. Part of the 50S ribosomal subunit.

Functionally, this protein binds specifically to 23S rRNA; its binding is stimulated by other ribosomal proteins, e.g. L4, L17, and L20. It is important during the early stages of 50S assembly. It makes multiple contacts with different domains of the 23S rRNA in the assembled 50S subunit and ribosome. The globular domain of the protein is located near the polypeptide exit tunnel on the outside of the subunit, while an extended beta-hairpin is found that lines the wall of the exit tunnel in the center of the 70S ribosome. This Metamycoplasma arthritidis (strain 158L3-1) (Mycoplasma arthritidis) protein is Large ribosomal subunit protein uL22.